Reading from the N-terminus, the 621-residue chain is Bifunctional protein GlmU (621 aa).

The interval 1–229 (MAERDLAVAI…AREIVGINDR (229 aa)) is pyrophosphorylase. Residues 11–14 (LAAG), K25, Q76, and 81–82 (GT) contribute to the UDP-N-acetyl-alpha-D-glucosamine site. D106 contributes to the Mg(2+) binding site. 4 residues coordinate UDP-N-acetyl-alpha-D-glucosamine: G143, E158, N173, and N227. N227 provides a ligand contact to Mg(2+). Residues 230-250 (RQLAQAYQILQDRLKEAWMEA) form a linker region. The N-acetyltransferase stretch occupies residues 251–621 (GVTFVDPDSV…TGVGIPSCPP (371 aa)). The UDP-N-acetyl-alpha-D-glucosamine site is built by R332 and K350. H362 (proton acceptor) is an active-site residue. Y365 and N376 together coordinate UDP-N-acetyl-alpha-D-glucosamine. Acetyl-CoA is bound by residues A379, 385–386 (NY), A422, and R441. The disordered stretch occupies residues 601–621 (ATPPSPQRADGTGVGIPSCPP).

The protein in the N-terminal section; belongs to the N-acetylglucosamine-1-phosphate uridyltransferase family. It in the C-terminal section; belongs to the transferase hexapeptide repeat family. In terms of assembly, homotrimer. Mg(2+) serves as cofactor.

It localises to the cytoplasm. It carries out the reaction alpha-D-glucosamine 1-phosphate + acetyl-CoA = N-acetyl-alpha-D-glucosamine 1-phosphate + CoA + H(+). It catalyses the reaction N-acetyl-alpha-D-glucosamine 1-phosphate + UTP + H(+) = UDP-N-acetyl-alpha-D-glucosamine + diphosphate. It participates in nucleotide-sugar biosynthesis; UDP-N-acetyl-alpha-D-glucosamine biosynthesis; N-acetyl-alpha-D-glucosamine 1-phosphate from alpha-D-glucosamine 6-phosphate (route II): step 2/2. The protein operates within nucleotide-sugar biosynthesis; UDP-N-acetyl-alpha-D-glucosamine biosynthesis; UDP-N-acetyl-alpha-D-glucosamine from N-acetyl-alpha-D-glucosamine 1-phosphate: step 1/1. Its pathway is bacterial outer membrane biogenesis; LPS lipid A biosynthesis. Catalyzes the last two sequential reactions in the de novo biosynthetic pathway for UDP-N-acetylglucosamine (UDP-GlcNAc). The C-terminal domain catalyzes the transfer of acetyl group from acetyl coenzyme A to glucosamine-1-phosphate (GlcN-1-P) to produce N-acetylglucosamine-1-phosphate (GlcNAc-1-P), which is converted into UDP-GlcNAc by the transfer of uridine 5-monophosphate (from uridine 5-triphosphate), a reaction catalyzed by the N-terminal domain. This chain is Bifunctional protein GlmU, found in Synechococcus sp. (strain JA-3-3Ab) (Cyanobacteria bacterium Yellowstone A-Prime).